A 397-amino-acid chain; its full sequence is UDP-GlcNAc:betaGal beta-1,3-N-acetylglucosaminyltransferase 7 (397 aa).

Topologically, residues 1–6 are cytoplasmic; that stretch reads MSLWKK. Residues 7–26 form a helical; Signal-anchor for type II membrane protein membrane-spanning segment; it reads TLYKSVCLALALLVAVTVFQ. Over 27–397 the chain is Lumenal; sequence RSVTPGQFLQ…LTCSLKFQVL (371 aa). 4 N-linked (GlcNAc...) asparagine glycosylation sites follow: N84, N90, N210, and N387.

The protein belongs to the glycosyltransferase 31 family.

It is found in the golgi apparatus membrane. Its pathway is protein modification; protein glycosylation. Functionally, N-acetyl glucosamine (GlcNAc) transferase that catalyzes the transfer of GlcNAc via a beta1-&gt;3 linkage from UDP-GlcNAc to the non-reducing terminal galactose (Gal) in the linearly growing chain of N- and O-linked keratan sulfate proteoglycans. Cooperates with B4GALT4 galactosyltransferase and CHST6 and CHST1 sulfotransferases to construct and elongate mono- and disulfated disaccharide units [-&gt;3Galbeta1-&gt;4(6-sulfoGlcNAcbeta)1-&gt;] and [-&gt;3(6-sulfoGalbeta)1-&gt;4(6-sulfoGlcNAcbeta)1-&gt;] within keratan sulfate polymer. Involved in biosynthesis of N-linked keratan sulfate proteoglycans in cornea, with an impact on proteoglycan fibril organization and corneal transparency. May play a role in the maintenance of tissue architecture by suppressing cellular motility and invasion. The chain is UDP-GlcNAc:betaGal beta-1,3-N-acetylglucosaminyltransferase 7 (B3gnt7) from Rattus norvegicus (Rat).